The primary structure comprises 92 residues: Small ribosomal subunit protein uS19 (92 aa).

It belongs to the universal ribosomal protein uS19 family.

In terms of biological role, protein S19 forms a complex with S13 that binds strongly to the 16S ribosomal RNA. This is Small ribosomal subunit protein uS19 from Picosynechococcus sp. (strain ATCC 27264 / PCC 7002 / PR-6) (Agmenellum quadruplicatum).